The chain runs to 449 residues: GTP-binding protein A (449 aa).

A disordered region spans residues 1–77 (MFNINPYKSK…LSSKTENSLS (77 aa)). Low complexity-rich tracts occupy residues 8–46 (KSKT…SSSS) and 67–77 (SLSSKTENSLS). Positions 149–386 (QNECNVLLLG…FMGHLRAKNK (238 aa)) constitute an AIG1-type G domain. Positions 158–165 (GRTGVGKS) are G1. 158 to 165 (GRTGVGKS) contributes to the GTP binding site. Positions 183–187 (SCTQD) are G2. Residues 204 to 207 (DTPG) are G3. Residues 275–278 (TYAN) are G4. A G5 region spans residues 336–338 (ENS).

The protein belongs to the TRAFAC class TrmE-Era-EngA-EngB-Septin-like GTPase superfamily. AIG1/Toc34/Toc159-like paraseptin GTPase family. IAN subfamily.

This chain is GTP-binding protein A (gtpA), found in Dictyostelium discoideum (Social amoeba).